We begin with the raw amino-acid sequence, 338 residues long: D-erythrose-4-phosphate dehydrogenase (338 aa).

NAD(+) is bound at residue 12-13; that stretch reads RI. Substrate-binding positions include 154–156, arginine 200, 213–214, and arginine 236; these read SCT and TK. Cysteine 155 functions as the Nucleophile in the catalytic mechanism. Residue asparagine 318 coordinates NAD(+).

Belongs to the glyceraldehyde-3-phosphate dehydrogenase family. Epd subfamily. Homotetramer.

The protein localises to the cytoplasm. It carries out the reaction D-erythrose 4-phosphate + NAD(+) + H2O = 4-phospho-D-erythronate + NADH + 2 H(+). It participates in cofactor biosynthesis; pyridoxine 5'-phosphate biosynthesis; pyridoxine 5'-phosphate from D-erythrose 4-phosphate: step 1/5. Functionally, catalyzes the NAD-dependent conversion of D-erythrose 4-phosphate to 4-phosphoerythronate. The protein is D-erythrose-4-phosphate dehydrogenase of Pectobacterium carotovorum subsp. carotovorum (strain PC1).